The chain runs to 221 residues: Uracil-DNA glycosylase 1 (221 aa).

Catalysis depends on Asp-61, which acts as the Proton acceptor.

Belongs to the uracil-DNA glycosylase (UDG) superfamily. UNG family.

Its subcellular location is the cytoplasm. It carries out the reaction Hydrolyzes single-stranded DNA or mismatched double-stranded DNA and polynucleotides, releasing free uracil.. In terms of biological role, excises uracil residues from the DNA which can arise as a result of misincorporation of dUMP residues by DNA polymerase or due to deamination of cytosine. The protein is Uracil-DNA glycosylase 1 of Listeria monocytogenes serotype 4b (strain F2365).